A 587-amino-acid chain; its full sequence is Envelope glycoprotein (587 aa).

The N-terminal stretch at 1–22 (MNFNHHFTWSLVIISQIFQVQA) is a signal peptide. Residues 23–527 (GFGDPREALL…TGFHGLLPYV (505 aa)) lie on the Extracellular side of the membrane. 2 N-linked (GlcNAc...) asparagine; by host glycosylation sites follow: N120 and N237. A CXXC motif is present at residues 248–251 (CWLC). 3 disulfides stabilise this stretch: C248–C251, C248–C484, and C476–C483. N-linked (GlcNAc...) asparagine; by host glycosylation is found at N266, N271, N277, N280, N295, N308, N322, N328, N340, and N358. Residues 399–419 (FIPLVIGLGITTAVSTGTAGL) form a fusion peptide region. 2 coiled-coil regions span residues 420-470 (GVSL…LLTA) and 480-516 (QEKC…DNPF). The tract at residues 459–475 (LQNRRGLDLLTAEQGGI) is immunosuppression. A CX6CC motif is present at residues 476–484 (CLALQEKCC). Residue N488 is glycosylated (N-linked (GlcNAc...) asparagine; by host). Residues 528-548 (MPLLGPLLCLLLVLSFGPIIF) form a helical membrane-spanning segment. The Cytoplasmic portion of the chain corresponds to 549-587 (NKLMTFIKHQIESIQAKPIQVHYHRLEQEDHGGSYLNLT). A YXXL motif; contains endocytosis signal motif is present at residues 571-574 (YHRL).

The mature envelope protein (Env) consists of a trimer of SU-TM heterodimers attached by a labile interchain disulfide bond. In terms of processing, specific enzymatic cleavages in vivo yield mature proteins. Envelope glycoproteins are synthesized as an inactive precursor that is N-glycosylated and processed likely by host cell furin or by a furin-like protease in the Golgi to yield the mature SU and TM proteins. The cleavage site between SU and TM requires the minimal sequence [KR]-X-[KR]-R. The R-peptide is released from the C-terminus of the cytoplasmic tail of the TM protein upon particle formation as a result of proteolytic cleavage by the viral protease. Cleavage of this peptide is required for TM to become fusogenic. Post-translationally, the CXXC motif is highly conserved across a broad range of retroviral envelope proteins. It is thought to participate in the formation of a labile disulfide bond possibly with the CX6CC motif present in the transmembrane protein. Isomerization of the intersubunit disulfide bond to an SU intrachain disulfide bond is thought to occur upon receptor recognition in order to allow membrane fusion.

Its subcellular location is the virion membrane. It localises to the host cell membrane. Functionally, the surface protein (SU) attaches the virus to the host cell by binding to its receptor. This interaction triggers the refolding of the transmembrane protein (TM) and is thought to activate its fusogenic potential by unmasking its fusion peptide. Fusion occurs at the host cell plasma membrane. The transmembrane protein (TM) acts as a class I viral fusion protein. Under the current model, the protein has at least 3 conformational states: pre-fusion native state, pre-hairpin intermediate state, and post-fusion hairpin state. During viral and target cell membrane fusion, the coiled coil regions (heptad repeats) assume a trimer-of-hairpins structure, positioning the fusion peptide in close proximity to the C-terminal region of the ectodomain. The formation of this structure appears to drive apposition and subsequent fusion of viral and target cell membranes. Membranes fusion leads to delivery of the nucleocapsid into the cytoplasm. In Simian retrovirus SRV-1, this protein is Envelope glycoprotein (env).